Consider the following 793-residue polypeptide: Netrin-B (793 aa).

Residues 1–22 (MVRATGTRMGLLLPIILALAIG) form the signal peptide. The Laminin N-terminal domain occupies 39-303 (KPRKCLPSFV…NLQDNDSADA (265 aa)). Residues asparagine 103, asparagine 125, and asparagine 298 are each glycosylated (N-linked (GlcNAc...) asparagine). Residues 332 to 378 (SVVKRQGKHKGSAYEKHYQSKLAATTPPQQPPKVTPPGKVTPPSTAA) are disordered. Residues 367–378 (PPGKVTPPSTAA) are compositionally biased toward low complexity. Disulfide bonds link cysteine 405-cysteine 414, cysteine 407-cysteine 461, cysteine 463-cysteine 472, cysteine 475-cysteine 495, cysteine 498-cysteine 507, cysteine 500-cysteine 525, cysteine 528-cysteine 537, cysteine 540-cysteine 558, cysteine 561-cysteine 573, cysteine 563-cysteine 580, cysteine 582-cysteine 591, cysteine 594-cysteine 608, cysteine 649-cysteine 738, cysteine 652-cysteine 740, and cysteine 665-cysteine 792. Laminin EGF-like domains follow at residues 405–497 (CKCN…ECKM), 498–560 (CQCN…VCKR), and 561–610 (CDCH…PCIK). A disordered region spans residues 420–446 (SGSGTALSDQDDGQDEDTPSAPSLANH). Acidic residues predominate over residues 428–437 (DQDDGQDEDT). The 144-residue stretch at 649–792 (CGKCKASPKK…KRFQRRARKC (144 aa)) folds into the NTR domain. An N-linked (GlcNAc...) asparagine glycan is attached at asparagine 746.

In terms of assembly, binds to unc-5 and fra receptors. In terms of tissue distribution, at 24 hr after puparium formation (APF), detected in the most anterior (oldest) L3, L4 and L5 lamina neurons (at protein level). At 48 hr APF, expressed in all L3, L4 and L5 neurons with slightly higher expression in the L3 neurons (at protein level). At the midline of developing CNS and in different subsets of neurons, muscles, and epidermal patches.

The protein resides in the secreted. The protein localises to the extracellular space. It is found in the extracellular matrix. It localises to the cytoplasm. Its subcellular location is the perinuclear region. Functionally, netrins control guidance of CNS commissural axons and peripheral motor axons. Its association with either fra or unc-5 receptors will lead to axon attraction or repulsion, respectively. While short-range repulsion requires both fra and unc-5 receptors, long-range repulsion only requires unc-5. This chain is Netrin-B (NetB), found in Drosophila melanogaster (Fruit fly).